Here is a 327-residue protein sequence, read N- to C-terminus: Malate dehydrogenase (327 aa).

An NAD(+)-binding site is contributed by 11–17 (GAAGQIG). Substrate is bound by residues Arg92 and Arg98. NAD(+) contacts are provided by residues Asn105, Gln112, and 129–131 (VGN). The substrate site is built by Asn131 and Arg162. Catalysis depends on His187, which acts as the Proton acceptor.

Belongs to the LDH/MDH superfamily. MDH type 2 family.

The catalysed reaction is (S)-malate + NAD(+) = oxaloacetate + NADH + H(+). Functionally, catalyzes the reversible oxidation of malate to oxaloacetate. The polypeptide is Malate dehydrogenase (Leptospira biflexa serovar Patoc (strain Patoc 1 / Ames)).